The following is a 448-amino-acid chain: Microtubule-associated protein tau (448 aa).

The span at 1–16 shows a compositional bias: basic and acidic residues; that stretch reads MAEPRQEFDVMEDHAQ. The tract at residues 1–264 is disordered; that stretch reads MAEPRQEFDV…GPMPDLKNVK (264 aa). Position 2 is an N-acetylalanine (Ala2). Tyr19 carries the phosphotyrosine modification. A Glycyl lysine isopeptide (Lys-Gly) (interchain with G-Cter in ubiquitin) cross-link involves residue Lys33. Phosphoserine occurs at positions 35 and 50. Residues 50 to 60 show a composition bias toward polar residues; that stretch reads SETSDAKSTPT. Thr58 and Thr60 each carry phosphothreonine. Positions 71–89 are enriched in low complexity; sequence EGAPGEQAAAQAPAEIPEG. A Phosphothreonine modification is found at Thr100. The span at 119–135 shows a compositional bias: basic and acidic residues; that stretch reads KGKDGTGPDDKKTKGAD. Position 144 is a phosphothreonine (Thr144). Arg146 is modified (omega-N-methylarginine). Position 154 is an N6,N6-dimethyllysine; alternate (Lys154). N6-acetyllysine; alternate is present on Lys154. A phosphothreonine mark is found at Thr160, Thr166, Thr167, and Thr172. The span at 163–176 shows a compositional bias: low complexity; it reads PAKTTPTPKTSPAT. The span at 189-200 shows a compositional bias: basic and acidic residues; it reads KSERGESGKSGD. Ser198 and Ser202 each carry phosphoserine. A compositionally biased stretch (low complexity) spans 201 to 221; sequence RSGYSSPGSPGTPGSRSRTPS. Phosphotyrosine is present on Tyr204. 3 positions are modified to phosphoserine: Ser205, Ser206, and Ser209. 2 positions are modified to phosphothreonine: Thr212 and Thr219. At Ser221 the chain carries Phosphoserine. Thr224 carries the phosphothreonine modification. Lys232 carries the N6-acetyllysine modification. Thr238 bears the Phosphothreonine mark. Phosphoserine is present on residues Ser242 and Ser244. 4 Tau/MAP repeats span residues 251–281, 282–312, 313–343, and 344–375; these read QAAP…GGGK, VQII…GGGS, VQIV…GGGQ, and VEVK…GGGN. Residue Lys261 forms a Glycyl lysine isopeptide (Lys-Gly) (interchain with G-Cter in ubiquitin) linkage. At Lys266 the chain carries N6-acetyllysine; alternate. Residue Lys266 is modified to N6-methyllysine; alternate. Lys266 is covalently cross-linked (Glycyl lysine isopeptide (Lys-Gly) (interchain with G-Cter in ubiquitin); alternate). The residue at position 269 (Ser269) is a Phosphoserine. A Glycyl lysine isopeptide (Lys-Gly) (interchain with G-Cter in ubiquitin) cross-link involves residue Lys274. Lys288 is modified (N6-acetyllysine; alternate). Residue Lys288 forms a Glycyl lysine isopeptide (Lys-Gly) (interchain with G-Cter in ubiquitin); alternate linkage. Phosphoserine occurs at positions 292 and 296. Lys297 carries the N6-acetyllysine modification. Cys298 and Cys329 are disulfide-bonded. Phosphoserine is present on Ser300. Lys305 is modified (N6-acetyllysine; alternate). Lys305 is covalently cross-linked (Glycyl lysine isopeptide (Lys-Gly) (interchain with G-Cter in ubiquitin); alternate). At Ser312 the chain carries Phosphoserine. The residue at position 318 (Lys318) is an N6,N6-dimethyllysine; alternate. 3 positions are modified to N6-acetyllysine; alternate: Lys318, Lys324, and Lys328. Glycyl lysine isopeptide (Lys-Gly) (interchain with G-Cter in ubiquitin); alternate cross-links involve residues Lys318, Lys324, and Lys328. Ser331 carries the post-translational modification Phosphoserine. 3 positions are modified to N6-acetyllysine; alternate: Lys338, Lys350, and Lys354. Glycyl lysine isopeptide (Lys-Gly) (interchain with G-Cter in ubiquitin); alternate cross-links involve residues Lys338, Lys350, and Lys354. Residue Arg356 is modified to Omega-N-methylarginine. Position 359 is a phosphoserine (Ser359). A Glycyl lysine isopeptide (Lys-Gly) (interchain with G-Cter in ubiquitin) cross-link involves residue Lys360. Ser363 bears the Phosphoserine mark. Lys376 is modified (N6-acetyllysine; alternate). Lys376 is covalently cross-linked (Glycyl lysine isopeptide (Lys-Gly) (interchain with G-Cter in ubiquitin); alternate). Residue Lys382 forms a Glycyl lysine isopeptide (Lys-Gly) (interchain with G-Cter in ubiquitin) linkage. Lys392 is modified (N6-acetyllysine; alternate). A Glycyl lysine isopeptide (Lys-Gly) (interchain with G-Cter in ubiquitin); alternate cross-link involves residue Lys392. A Phosphotyrosine modification is found at Tyr401. A phosphoserine mark is found at Ser403 and Ser407. The disordered stretch occupies residues 405-424; the sequence is VVSGDTSPRHLSNVSSTGSI. Positions 408–423 are enriched in polar residues; it reads GDTSPRHLSNVSSTGS. The residue at position 410 (Thr410) is a Phosphothreonine. Ser411, Ser416, Ser423, and Ser429 each carry phosphoserine. Thr434 is subject to Phosphothreonine.

In terms of assembly, interacts with MARK1, MARK2, MARK3 and MARK4. Interacts with SQSTM1 when polyubiquitinated. Interacts with PSMC2 through SQSTM1. Interacts with FKBP4. Binds to CSNK1D. Interacts with SGK1. Interacts with PIN1. Interacts with LRRK2. Interacts with LRP1, leading to endocytosis; this interaction is reduced in the presence of LRPAP1/RAP. In terms of processing, polyubiquitinated. Requires functional TRAF6 and may provoke SQSTM1-dependent degradation by the proteasome. Phosphorylation at various serine and threonine residues in S-P or T-P motifs by proline-directed protein kinases (PDPK1, CDK1, CDK5, GSK3, MAPK) (a few sites per protein in interphase, more in mitosis), and at serine residues in K-X-G-S motifs by MAP/microtubule affinity-regulating kinase (MARK1, MARK2, MARK3, MARK4), causing detachment from microtubules, and their disassembly. Phosphorylation at Ser-269 by BRSK1 and BRSK2 in neurons affects ability to bind microtubules and plays a role in neuron polarization. Phosphorylated by PHK. Dephosphorylation at several serine and threonine residues by the serine/threonine phosphatase PPP5C. Post-translationally, O-glycosylated; contains at least 4 GlcNAc. Site-specific or stoichiometric changes in glycosylation may modulate tau function and also play a role in PHF's formation. Expressed in neurons.

It localises to the cytoplasm. It is found in the cytosol. Its subcellular location is the cell membrane. The protein localises to the cytoskeleton. The protein resides in the cell projection. It localises to the axon. It is found in the dendrite. Its subcellular location is the secreted. Its function is as follows. Promotes microtubule assembly and stability, and might be involved in the establishment and maintenance of neuronal polarity. The C-terminus binds axonal microtubules while the N-terminus binds neural plasma membrane components, suggesting that tau functions as a linker protein between both. Axonal polarity is predetermined by tau localization (in the neuronal cell) in the domain of the cell body defined by the centrosome. The short isoforms allow plasticity of the cytoskeleton whereas the longer isoforms may preferentially play a role in its stabilization. In Bos taurus (Bovine), this protein is Microtubule-associated protein tau (MAPT).